A 279-amino-acid chain; its full sequence is Beta-lactamase (279 aa).

The signal sequence occupies residues 1-21 (MRYVRLCVISLLATLPLVVYA). Ser66 (acyl-ester intermediate) is an active-site residue. Cys73 and Cys119 are disulfide-bonded. 230-232 (KTG) lines the substrate pocket.

The protein belongs to the class-A beta-lactamase family.

The enzyme catalyses a beta-lactam + H2O = a substituted beta-amino acid. In Klebsiella pneumoniae, this protein is Beta-lactamase.